Here is a 963-residue protein sequence, read N- to C-terminus: Bifunctional glutamine synthetase adenylyltransferase/adenylyl-removing enzyme (963 aa).

Residues 1–451 (MAAPSELQLY…EHFADIIAER (451 aa)) are adenylyl removase. The tract at residues 461 to 963 (TIEWKALWAG…VAFWEKVFAE (503 aa)) is adenylyl transferase.

It belongs to the GlnE family. Mg(2+) is required as a cofactor.

The catalysed reaction is [glutamine synthetase]-O(4)-(5'-adenylyl)-L-tyrosine + phosphate = [glutamine synthetase]-L-tyrosine + ADP. It catalyses the reaction [glutamine synthetase]-L-tyrosine + ATP = [glutamine synthetase]-O(4)-(5'-adenylyl)-L-tyrosine + diphosphate. Its function is as follows. Involved in the regulation of glutamine synthetase GlnA, a key enzyme in the process to assimilate ammonia. When cellular nitrogen levels are high, the C-terminal adenylyl transferase (AT) inactivates GlnA by covalent transfer of an adenylyl group from ATP to specific tyrosine residue of GlnA, thus reducing its activity. Conversely, when nitrogen levels are low, the N-terminal adenylyl removase (AR) activates GlnA by removing the adenylyl group by phosphorolysis, increasing its activity. The regulatory region of GlnE binds the signal transduction protein PII (GlnB) which indicates the nitrogen status of the cell. In Hahella chejuensis (strain KCTC 2396), this protein is Bifunctional glutamine synthetase adenylyltransferase/adenylyl-removing enzyme.